Reading from the N-terminus, the 324-residue chain is Hydroxyacylglutathione hydrolase 2, mitochondrial (324 aa).

The transit peptide at 1–64 (MQTISKASSA…KSIRVSKFCS (64 aa)) directs the protein to the mitochondrion. Zn(2+) is bound by residues H124 and H126. Positions 128 and 129 each coordinate Fe cation. Positions 182 and 201 each coordinate Zn(2+). Fe cation contacts are provided by D201 and H239.

This sequence belongs to the metallo-beta-lactamase superfamily. Glyoxalase II family. As to quaternary structure, monomer. The cofactor is Fe(3+). Fe(2+) is required as a cofactor. It depends on Zn(2+) as a cofactor.

It is found in the mitochondrion. It catalyses the reaction an S-(2-hydroxyacyl)glutathione + H2O = a 2-hydroxy carboxylate + glutathione + H(+). It functions in the pathway secondary metabolite metabolism; methylglyoxal degradation; (R)-lactate from methylglyoxal: step 2/2. Its function is as follows. Thiolesterase that catalyzes the hydrolysis of S-D-lactoyl-glutathione to form glutathione and D-lactic acid. The protein is Hydroxyacylglutathione hydrolase 2, mitochondrial of Arabidopsis thaliana (Mouse-ear cress).